The sequence spans 945 residues: Valine--tRNA ligase (945 aa).

A 'HIGH' region motif is present at residues 42–52 (PNVTGTLHMGH). A 'KMSKS' region motif is present at residues 552 to 556 (KMSKS). Lysine 555 contributes to the ATP binding site. Residues 879–945 (DKAAETARLS…VQNQLAKLKD (67 aa)) adopt a coiled-coil conformation.

This sequence belongs to the class-I aminoacyl-tRNA synthetase family. ValS type 1 subfamily. In terms of assembly, monomer.

The protein localises to the cytoplasm. It carries out the reaction tRNA(Val) + L-valine + ATP = L-valyl-tRNA(Val) + AMP + diphosphate. Catalyzes the attachment of valine to tRNA(Val). As ValRS can inadvertently accommodate and process structurally similar amino acids such as threonine, to avoid such errors, it has a 'posttransfer' editing activity that hydrolyzes mischarged Thr-tRNA(Val) in a tRNA-dependent manner. The protein is Valine--tRNA ligase of Neisseria meningitidis serogroup B (strain ATCC BAA-335 / MC58).